Reading from the N-terminus, the 247-residue chain is Cell division protein ZapD (247 aa).

The protein belongs to the ZapD family. As to quaternary structure, interacts with FtsZ.

The protein resides in the cytoplasm. Its function is as follows. Cell division factor that enhances FtsZ-ring assembly. Directly interacts with FtsZ and promotes bundling of FtsZ protofilaments, with a reduction in FtsZ GTPase activity. This is Cell division protein ZapD from Shigella boydii serotype 18 (strain CDC 3083-94 / BS512).